A 338-amino-acid polypeptide reads, in one-letter code: Replication factor C subunit 3 (338 aa).

Glycine 57–threonine 64 is a binding site for ATP.

This sequence belongs to the activator 1 small subunits family. In terms of assembly, heteropentamer of subunits RFC1, RFC2, RFC3, RFC4 and RFC5 that forms a complex with PCNA in the presence of ATP.

The protein resides in the nucleus. Functionally, the elongation of primed DNA templates by DNA polymerase delta and epsilon requires the action of the accessory proteins proliferating cell nuclear antigen (PCNA) and activator 1. Subunit 3 binds ATP. The sequence is that of Replication factor C subunit 3 (RFC3) from Blastobotrys adeninivorans (Yeast).